The sequence spans 590 residues: Protein NRT1/ PTR FAMILY 6.4 (590 aa).

Positions 1–24 (MVHVSSSHGAKDGSEEAYDYRGNP) are disordered. 12 helical membrane passes run 48–68 (ICVM…LHIS), 73–93 (ATIV…GGFL), 104–124 (VAIS…ATTI), 147–167 (GHQL…GGGI), 197–217 (FYFS…YVQD), 222–242 (GWGY…LLCG), 332–352 (VKLV…WTIY), 371–391 (GSFT…ILLF), 419–439 (IGVG…IENA), 453–473 (AFWL…AYVG), 492–512 (GLFL…VSLV), and 533–553 (FYWL…VFAM).

Belongs to the major facilitator superfamily. Proton-dependent oligopeptide transporter (POT/PTR) (TC 2.A.17) family. Expressed in leaves, flowers and siliques. Detected in leaves.

The protein localises to the membrane. Functionally, low-affinity nitrate transporter. The chain is Protein NRT1/ PTR FAMILY 6.4 (NPF6.4) from Arabidopsis thaliana (Mouse-ear cress).